A 192-amino-acid polypeptide reads, in one-letter code: Fe/S biogenesis protein NfuA (192 aa).

[4Fe-4S] cluster contacts are provided by cysteine 149 and cysteine 152.

It belongs to the NfuA family. Homodimer. Requires [4Fe-4S] cluster as cofactor.

In terms of biological role, involved in iron-sulfur cluster biogenesis. Binds a 4Fe-4S cluster, can transfer this cluster to apoproteins, and thereby intervenes in the maturation of Fe/S proteins. Could also act as a scaffold/chaperone for damaged Fe/S proteins. The protein is Fe/S biogenesis protein NfuA of Colwellia psychrerythraea (strain 34H / ATCC BAA-681) (Vibrio psychroerythus).